We begin with the raw amino-acid sequence, 162 residues long: Large ribosomal subunit protein bL17 (162 aa).

Positions 126–162 (ATAKKATRTRRSKKSAAATEAPAAPAAETTEEAPKAE) are disordered. Over residues 130–139 (KATRTRRSKK) the composition is skewed to basic residues. Low complexity predominate over residues 140–153 (SAAATEAPAAPAAE).

Belongs to the bacterial ribosomal protein bL17 family. Part of the 50S ribosomal subunit. Contacts protein L32.

In Phocaeicola vulgatus (strain ATCC 8482 / DSM 1447 / JCM 5826 / CCUG 4940 / NBRC 14291 / NCTC 11154) (Bacteroides vulgatus), this protein is Large ribosomal subunit protein bL17.